A 351-amino-acid polypeptide reads, in one-letter code: Histidinol-phosphate aminotransferase (351 aa).

Lys-221 carries the N6-(pyridoxal phosphate)lysine modification.

The protein belongs to the class-II pyridoxal-phosphate-dependent aminotransferase family. Histidinol-phosphate aminotransferase subfamily. In terms of assembly, homodimer. The cofactor is pyridoxal 5'-phosphate.

The enzyme catalyses L-histidinol phosphate + 2-oxoglutarate = 3-(imidazol-4-yl)-2-oxopropyl phosphate + L-glutamate. It functions in the pathway amino-acid biosynthesis; L-histidine biosynthesis; L-histidine from 5-phospho-alpha-D-ribose 1-diphosphate: step 7/9. This chain is Histidinol-phosphate aminotransferase, found in Staphylococcus epidermidis (strain ATCC 35984 / DSM 28319 / BCRC 17069 / CCUG 31568 / BM 3577 / RP62A).